Here is a 339-residue protein sequence, read N- to C-terminus: GTP 3',8-cyclase (339 aa).

Residues 13-249 form the Radical SAM core domain; it reads RYGRPLRDLR…GEVAQRHAFA (237 aa). R22 contributes to the GTP binding site. Residues C29 and C33 each contribute to the [4Fe-4S] cluster site. Y35 serves as a coordination point for S-adenosyl-L-methionine. C36 contacts [4Fe-4S] cluster. R75 is a binding site for GTP. G79 serves as a coordination point for S-adenosyl-L-methionine. T106 contacts GTP. S130 serves as a coordination point for S-adenosyl-L-methionine. K168 contributes to the GTP binding site. An S-adenosyl-L-methionine-binding site is contributed by M202. Residues C266 and C269 each coordinate [4Fe-4S] cluster. Residue 271 to 273 participates in GTP binding; the sequence is RAR. C283 provides a ligand contact to [4Fe-4S] cluster.

The protein belongs to the radical SAM superfamily. MoaA family. Monomer and homodimer. It depends on [4Fe-4S] cluster as a cofactor.

The catalysed reaction is GTP + AH2 + S-adenosyl-L-methionine = (8S)-3',8-cyclo-7,8-dihydroguanosine 5'-triphosphate + 5'-deoxyadenosine + L-methionine + A + H(+). The protein operates within cofactor biosynthesis; molybdopterin biosynthesis. In terms of biological role, catalyzes the cyclization of GTP to (8S)-3',8-cyclo-7,8-dihydroguanosine 5'-triphosphate. The polypeptide is GTP 3',8-cyclase (Xanthomonas campestris pv. campestris (strain B100)).